Here is a 320-residue protein sequence, read N- to C-terminus: Acetyl-coenzyme A carboxylase carboxyl transferase subunit alpha (320 aa).

The 262-residue stretch at 33–294 folds into the CoA carboxyltransferase C-terminal domain; sequence AFESEIQALR…GDAVEDELKA (262 aa).

It belongs to the AccA family. In terms of assembly, acetyl-CoA carboxylase is a heterohexamer composed of biotin carboxyl carrier protein (AccB), biotin carboxylase (AccC) and two subunits each of ACCase subunit alpha (AccA) and ACCase subunit beta (AccD).

It is found in the cytoplasm. It carries out the reaction N(6)-carboxybiotinyl-L-lysyl-[protein] + acetyl-CoA = N(6)-biotinyl-L-lysyl-[protein] + malonyl-CoA. Its pathway is lipid metabolism; malonyl-CoA biosynthesis; malonyl-CoA from acetyl-CoA: step 1/1. In terms of biological role, component of the acetyl coenzyme A carboxylase (ACC) complex. First, biotin carboxylase catalyzes the carboxylation of biotin on its carrier protein (BCCP) and then the CO(2) group is transferred by the carboxyltransferase to acetyl-CoA to form malonyl-CoA. The sequence is that of Acetyl-coenzyme A carboxylase carboxyl transferase subunit alpha from Caulobacter sp. (strain K31).